A 224-amino-acid chain; its full sequence is Lipoprotein-releasing system ATP-binding protein LolD (224 aa).

An ABC transporter domain is found at 4–224; it reads LSIRNVFKSY…RLAGGEVSEA (221 aa). 40 to 47 contributes to the ATP binding site; that stretch reads GASGAGKS.

Belongs to the ABC transporter superfamily. Lipoprotein translocase (TC 3.A.1.125) family. In terms of assembly, the complex is composed of two ATP-binding proteins (LolD) and two transmembrane proteins (LolC and LolE).

It is found in the cell inner membrane. Part of the ABC transporter complex LolCDE involved in the translocation of mature outer membrane-directed lipoproteins, from the inner membrane to the periplasmic chaperone, LolA. Responsible for the formation of the LolA-lipoprotein complex in an ATP-dependent manner. The chain is Lipoprotein-releasing system ATP-binding protein LolD from Myxococcus xanthus (strain DK1622).